The primary structure comprises 90 residues: UPF0298 protein BLi01717/BL02989 (90 aa).

It belongs to the UPF0298 family.

Its subcellular location is the cytoplasm. The polypeptide is UPF0298 protein BLi01717/BL02989 (Bacillus licheniformis (strain ATCC 14580 / DSM 13 / JCM 2505 / CCUG 7422 / NBRC 12200 / NCIMB 9375 / NCTC 10341 / NRRL NRS-1264 / Gibson 46)).